The chain runs to 431 residues: Keratin, type I cytoskeletal 40 (431 aa).

A head region spans residues 1-89; sequence MASDCSPTGC…CEDGVFNSNE (89 aa). An IF rod domain is found at 89–400; sequence EKETMQFLND…GLLDSEDSRL (312 aa). Residues 90 to 124 are coil 1A; that stretch reads KETMQFLNDRLASYLEKVRGLEELNAELECRIREQ. The interval 125–135 is linker 1; that stretch reads CEEDVPLVCPD. The coil 1B stretch occupies residues 136–236; sequence YQCYFDTIED…HEEEVNVLRG (101 aa). Residues 237-252 form a linker 12 region; sequence QLGDRLSVELDTAPTT. The interval 253–396 is coil 2; sequence DLNRVLDEMR…NTYQGLLDSE (144 aa). Residues 397 to 431 form a tail region; it reads DSRLPCNPCSATSMSNDTCEPCSAYVICTVENSCP.

This sequence belongs to the intermediate filament family. In terms of assembly, heterotetramer of two type I and two type II keratins.

May play a role in late hair differentiation. This is Keratin, type I cytoskeletal 40 (KRT40) from Bos taurus (Bovine).